The following is a 72-amino-acid chain: MASNKISFSFVLCLYMCSLLDAKSMNPTGRRCPDPNGVEKKSMCYSSCKTQGFMGGSCQGHKGNYMCECYEG.

An N-terminal signal peptide occupies residues 1–22 (MASNKISFSFVLCLYMCSLLDA). 3 disulfides stabilise this stretch: Cys32–Cys58, Cys44–Cys67, and Cys48–Cys69.

The protein belongs to the DEFL family.

Its subcellular location is the secreted. The chain is Defensin-like protein 35 from Arabidopsis thaliana (Mouse-ear cress).